The chain runs to 381 residues: Early boundary activity protein 2 (381 aa).

Residues 210–245 (NDAEDVPAPPSKRPRHMSTSSSESHIPDTASEKDEK) are disordered. Positions 268–365 (PNGTQITAHQ…TKCADTAKKY (98 aa)) constitute a BEN domain.

In terms of assembly, the heterotrimeric Elba complex consists of Elba1, Elba2 and Elba3.

It is found in the nucleus. In terms of biological role, the heterotrimeric Elba complex is required for chromatin domain boundary function during early embryogenesis. It binds to a 8-bp sequence 5'-CCAATAAG-3' in the Fab-7 insulator or boundary element in the bithorax complex and contributes to its insulator or boundary activity. Elba2 can act as a transcriptional repressor and binds the palindromic sequence 5'-CCAATTGG-3' to mediate transcriptional repression. In Drosophila melanogaster (Fruit fly), this protein is Early boundary activity protein 2.